Consider the following 187-residue polypeptide: Plasmodium-specific hydrophobic abundant protein (187 aa).

The signal sequence occupies residues 1–18 (MMKYVFVALCLFAVVALA).

It to HAP-S protein.

It is found in the membrane. The protein is Plasmodium-specific hydrophobic abundant protein of Physarum polycephalum (Slime mold).